Here is a 31-residue protein sequence, read N- to C-terminus: Cyclotide vinc-B (31 aa).

Positions 1 to 31 form a cross-link, cyclopeptide (Gly-Asn); the sequence is GSIPACGESCFKGKCYTPGCTCSKYPLCAKN. 3 disulfide bridges follow: C6–C20, C10–C22, and C15–C28.

Belongs to the cyclotide family. This is a cyclic peptide.

Its function is as follows. Probably participates in a plant defense mechanism. The polypeptide is Cyclotide vinc-B (Viola inconspicua).